The chain runs to 358 residues: 3-dehydroquinate synthase (358 aa).

NAD(+) contacts are provided by residues G105 to D109, T129 to T130, K142, K151, and T169 to T172. The Zn(2+) site is built by E184, H245, and H262.

This sequence belongs to the sugar phosphate cyclases superfamily. Dehydroquinate synthase family. NAD(+) serves as cofactor. Requires Co(2+) as cofactor. Zn(2+) is required as a cofactor.

Its subcellular location is the cytoplasm. The catalysed reaction is 7-phospho-2-dehydro-3-deoxy-D-arabino-heptonate = 3-dehydroquinate + phosphate. Its pathway is metabolic intermediate biosynthesis; chorismate biosynthesis; chorismate from D-erythrose 4-phosphate and phosphoenolpyruvate: step 2/7. In terms of biological role, catalyzes the conversion of 3-deoxy-D-arabino-heptulosonate 7-phosphate (DAHP) to dehydroquinate (DHQ). The chain is 3-dehydroquinate synthase from Enterococcus faecalis (strain ATCC 700802 / V583).